The chain runs to 141 residues: Large ribosomal subunit protein uL11 (141 aa).

The protein belongs to the universal ribosomal protein uL11 family. Part of the ribosomal stalk of the 50S ribosomal subunit. Interacts with L10 and the large rRNA to form the base of the stalk. L10 forms an elongated spine to which L12 dimers bind in a sequential fashion forming a multimeric L10(L12)X complex. One or more lysine residues are methylated.

In terms of biological role, forms part of the ribosomal stalk which helps the ribosome interact with GTP-bound translation factors. The chain is Large ribosomal subunit protein uL11 from Streptococcus mutans serotype c (strain ATCC 700610 / UA159).